We begin with the raw amino-acid sequence, 1827 residues long: Sucrase-isomaltase, intestinal (1827 aa).

Over 2-12 (ARKKFSGLEIS) the chain is Cytoplasmic. A Phosphoserine; by PKA modification is found at S7. Residues 13–32 (LIVLFVIVTIIAIALIVVLA) form a helical; Signal-anchor for type II membrane protein membrane-spanning segment. Residues 33 to 1827 (TKTPAVDEIS…LEEPIEINWS (1795 aa)) are Lumenal-facing. The segment at 40–61 (EISDSTSTPATTRVTTNPSDSG) is disordered. A compositionally biased stretch (low complexity) spans 45 to 55 (TSTPATTRVTT). The P-type 1 domain occupies 61 to 110 (GKCPNVLNDPVNVRINCIPEQFPTEGICAQRGCCWRPWNDSLIPWCFFVD). 3 cysteine pairs are disulfide-bonded: C63–C94, C77–C93, and C88–C106. N99 is a glycosylation site (N-linked (GlcNAc...) asparagine). The segment at 110–1007 (DNHGYNVQDM…DLQLNTANAR (898 aa)) is isomaltase. Y237 and Y239 each carry sulfotyrosine. D264 and D388 together coordinate substrate. Sulfotyrosine occurs at positions 391 and 400. N-linked (GlcNAc...) asparagine glycosylation is found at N437 and N455. D505 acts as the Nucleophile; for isomaltase activity in catalysis. A disulfide bond links C520 and C545. R588 lines the substrate pocket. D604 acts as the For isomaltase activity in catalysis. A disulfide bridge connects residues C635 and C646. H662 serves as a coordination point for substrate. Sulfotyrosine is present on residues Y667, Y763, and Y765. 4 N-linked (GlcNAc...) asparagine glycosylation sites follow: N823, N855, N904, and N926. The P-type 2 domain maps to 932-978 (NQIFSENERFNCYPDADLATEQKCTQRGCVWRTGSSLSKAPECYFPR). Residues 1008–1827 (IKLPSDPIST…LEEPIEINWS (820 aa)) form a sucrase region. N-linked (GlcNAc...) asparagine glycosylation is found at N1235, N1303, N1340, and N1354. The active-site Nucleophile; for sucrase activity is the D1394. The active-site For sucrase activity is the E1397. N1403 carries an N-linked (GlcNAc...) asparagine glycan. The active-site Proton donor; for isomaltase activity is the D1500. 6 N-linked (GlcNAc...) asparagine glycosylation sites follow: N1535, N1572, N1675, N1748, N1763, and N1815.

Belongs to the glycosyl hydrolase 31 family. The resulting sucrase and isomaltase subunits stay associated with one another in a complex by non-covalent linkages. Post-translationally, the precursor is proteolytically cleaved when exposed to pancreatic proteases in the intestinal lumen. In terms of processing, sulfated. As to expression, expressed in the poorly differentiated crypt cells of the small intestine as well as in the mature villous cells. Expressed at very low levels in the colon.

It localises to the apical cell membrane. The catalysed reaction is Hydrolysis of sucrose and maltose by an alpha-D-glucosidase-type action.. It carries out the reaction Hydrolysis of (1-&gt;6)-alpha-D-glucosidic linkages in some oligosaccharides produced from starch and glycogen by alpha-amylase, and in isomaltose.. Functionally, plays an important role in the final stage of carbohydrate digestion. Isomaltase activity is specific for both alpha-1,4- and alpha-1,6-oligosaccharides. This chain is Sucrase-isomaltase, intestinal (SI), found in Homo sapiens (Human).